A 680-amino-acid chain; its full sequence is 1-deoxy-D-xylulose-5-phosphate synthase (680 aa).

The span at 1–17 (MQQSPHSPQSQSLSASA) shows a compositional bias: low complexity. The segment at 1 to 20 (MQQSPHSPQSQSLSASAVDS) is disordered. Thiamine diphosphate is bound by residues histidine 113 and 154 to 156 (GHS). Position 185 (aspartate 185) interacts with Mg(2+). Thiamine diphosphate contacts are provided by residues 186-187 (GA), asparagine 214, phenylalanine 323, and glutamate 408. Asparagine 214 contributes to the Mg(2+) binding site.

Belongs to the transketolase family. DXPS subfamily. Homodimer. Requires Mg(2+) as cofactor. Thiamine diphosphate is required as a cofactor.

It carries out the reaction D-glyceraldehyde 3-phosphate + pyruvate + H(+) = 1-deoxy-D-xylulose 5-phosphate + CO2. The protein operates within metabolic intermediate biosynthesis; 1-deoxy-D-xylulose 5-phosphate biosynthesis; 1-deoxy-D-xylulose 5-phosphate from D-glyceraldehyde 3-phosphate and pyruvate: step 1/1. Functionally, catalyzes the acyloin condensation reaction between C atoms 2 and 3 of pyruvate and glyceraldehyde 3-phosphate to yield 1-deoxy-D-xylulose-5-phosphate (DXP). The polypeptide is 1-deoxy-D-xylulose-5-phosphate synthase (Psychrobacter cryohalolentis (strain ATCC BAA-1226 / DSM 17306 / VKM B-2378 / K5)).